A 321-amino-acid chain; its full sequence is Cytochrome c biogenesis protein CcsA (321 aa).

8 helical membrane-spanning segments follow: residues 9–29 (ILTH…LMNL), 44–64 (GMIA…IYSG), 71–91 (LYES…VPYF), 98–118 (FSAI…SGLL), 143–163 (MLLS…LLVI), 225–245 (VISL…VWAN), 252–272 (WNWD…AIYL), and 286–306 (AIVA…VNLL).

Belongs to the CcmF/CycK/Ccl1/NrfE/CcsA family. In terms of assembly, may interact with Ccs1.

It is found in the plastid. It localises to the chloroplast thylakoid membrane. Its function is as follows. Required during biogenesis of c-type cytochromes (cytochrome c6 and cytochrome f) at the step of heme attachment. This is Cytochrome c biogenesis protein CcsA from Acorus calamus var. americanus (American sweet flag).